The sequence spans 135 residues: Large ribosomal subunit protein eL32 (135 aa).

It belongs to the eukaryotic ribosomal protein eL32 family.

The sequence is that of Large ribosomal subunit protein eL32 from Methanococcus maripaludis (strain C7 / ATCC BAA-1331).